A 157-amino-acid polypeptide reads, in one-letter code: Lipoprotein signal peptidase (157 aa).

3 helical membrane passes run 10–30 (LIFI…KYAI), 58–78 (FLEG…FIFL), and 84–104 (LFKN…SNVL). Catalysis depends on residues aspartate 114 and aspartate 131. The chain crosses the membrane as a helical span at residues 122-142 (FDFAIFNFADVMIDVGVGVLL).

Belongs to the peptidase A8 family.

It is found in the cell inner membrane. It carries out the reaction Release of signal peptides from bacterial membrane prolipoproteins. Hydrolyzes -Xaa-Yaa-Zaa-|-(S,diacylglyceryl)Cys-, in which Xaa is hydrophobic (preferably Leu), and Yaa (Ala or Ser) and Zaa (Gly or Ala) have small, neutral side chains.. It functions in the pathway protein modification; lipoprotein biosynthesis (signal peptide cleavage). In terms of biological role, this protein specifically catalyzes the removal of signal peptides from prolipoproteins. The sequence is that of Lipoprotein signal peptidase from Helicobacter pylori (strain Shi470).